A 209-amino-acid polypeptide reads, in one-letter code: Imidazoleglycerol-phosphate dehydratase (209 aa).

The tract at residues 1–23 (MQLSDRPLTAPGTAPRQATVSRR) is disordered.

It belongs to the imidazoleglycerol-phosphate dehydratase family.

It localises to the cytoplasm. It catalyses the reaction D-erythro-1-(imidazol-4-yl)glycerol 3-phosphate = 3-(imidazol-4-yl)-2-oxopropyl phosphate + H2O. It participates in amino-acid biosynthesis; L-histidine biosynthesis; L-histidine from 5-phospho-alpha-D-ribose 1-diphosphate: step 6/9. The protein is Imidazoleglycerol-phosphate dehydratase of Synechococcus elongatus (strain ATCC 33912 / PCC 7942 / FACHB-805) (Anacystis nidulans R2).